The sequence spans 123 residues: Ribosome-binding factor A (123 aa).

The protein belongs to the RbfA family. Monomer. Binds 30S ribosomal subunits, but not 50S ribosomal subunits or 70S ribosomes.

Its subcellular location is the cytoplasm. Functionally, one of several proteins that assist in the late maturation steps of the functional core of the 30S ribosomal subunit. Associates with free 30S ribosomal subunits (but not with 30S subunits that are part of 70S ribosomes or polysomes). Required for efficient processing of 16S rRNA. May interact with the 5'-terminal helix region of 16S rRNA. This chain is Ribosome-binding factor A, found in Cupriavidus taiwanensis (strain DSM 17343 / BCRC 17206 / CCUG 44338 / CIP 107171 / LMG 19424 / R1) (Ralstonia taiwanensis (strain LMG 19424)).